Reading from the N-terminus, the 177-residue chain is MIRKGAALVGLVLMSPVIAQPVMVESGRVHLRGQLVNGGCAVATESQDLRVLMGQYRTNAFTGPGSFAPVSVPFSLRLISCSAEVWRHVGIAFAGVTPAEDPHVFLASGEGIGNAGIGLALFDDQQRQIIPNTLPLHYAPILTSEMTLHFTARYRAISENMTPGRIHSEVWFTLVYP.

An N-terminal signal peptide occupies residues 1–19 (MIRKGAALVGLVLMSPVIA). A disulfide bridge links cysteine 40 with cysteine 81.

Belongs to the fimbrial protein family.

The protein resides in the fimbrium. The protein is Putative fimbrin-like protein FimI (fimI) of Salmonella typhi.